The chain runs to 368 residues: tRNA 2-selenouridine synthase (368 aa).

Residues 15-138 (MLSGHPMIDV…MRQYLIEVID (124 aa)) enclose the Rhodanese domain. Residue Cys-98 is the S-selanylcysteine intermediate of the active site.

The protein belongs to the SelU family. As to quaternary structure, monomer.

It carries out the reaction 5-methylaminomethyl-2-thiouridine(34) in tRNA + selenophosphate + (2E)-geranyl diphosphate + H2O + H(+) = 5-methylaminomethyl-2-selenouridine(34) in tRNA + (2E)-thiogeraniol + phosphate + diphosphate. It catalyses the reaction 5-methylaminomethyl-2-thiouridine(34) in tRNA + (2E)-geranyl diphosphate = 5-methylaminomethyl-S-(2E)-geranyl-thiouridine(34) in tRNA + diphosphate. The enzyme catalyses 5-methylaminomethyl-S-(2E)-geranyl-thiouridine(34) in tRNA + selenophosphate + H(+) = 5-methylaminomethyl-2-(Se-phospho)selenouridine(34) in tRNA + (2E)-thiogeraniol. The catalysed reaction is 5-methylaminomethyl-2-(Se-phospho)selenouridine(34) in tRNA + H2O = 5-methylaminomethyl-2-selenouridine(34) in tRNA + phosphate. Its function is as follows. Involved in the post-transcriptional modification of the uridine at the wobble position (U34) of tRNA(Lys), tRNA(Glu) and tRNA(Gln). Catalyzes the conversion of 2-thiouridine (S2U-RNA) to 2-selenouridine (Se2U-RNA). Acts in a two-step process involving geranylation of 2-thiouridine (S2U) to S-geranyl-2-thiouridine (geS2U) and subsequent selenation of the latter derivative to 2-selenouridine (Se2U) in the tRNA chain. The sequence is that of tRNA 2-selenouridine synthase from Shewanella woodyi (strain ATCC 51908 / MS32).